The sequence spans 234 residues: Ubiquitin carboxyl-terminal hydrolase 3 (234 aa).

The UCH catalytic domain maps to 12–232 (RWLPLESNPD…LNFNLIAISK (221 aa)). Cys-101 serves as the catalytic Nucleophile. The active-site Proton donor is His-172.

The protein belongs to the peptidase C12 family.

The catalysed reaction is Thiol-dependent hydrolysis of ester, thioester, amide, peptide and isopeptide bonds formed by the C-terminal Gly of ubiquitin (a 76-residue protein attached to proteins as an intracellular targeting signal).. This Arabidopsis thaliana (Mouse-ear cress) protein is Ubiquitin carboxyl-terminal hydrolase 3.